The sequence spans 222 residues: Ribosomal RNA large subunit methyltransferase E (222 aa).

Over residues 1 to 13 the composition is skewed to basic and acidic residues; the sequence is MSRSDKNPHERLK. The disordered stretch occupies residues 1–22; sequence MSRSDKNPHERLKTAKKRTASS. Residues G75, W77, D94, D110, and D134 each contribute to the S-adenosyl-L-methionine site. K174 functions as the Proton acceptor in the catalytic mechanism.

The protein belongs to the class I-like SAM-binding methyltransferase superfamily. RNA methyltransferase RlmE family.

It localises to the cytoplasm. The catalysed reaction is uridine(2552) in 23S rRNA + S-adenosyl-L-methionine = 2'-O-methyluridine(2552) in 23S rRNA + S-adenosyl-L-homocysteine + H(+). In terms of biological role, specifically methylates the uridine in position 2552 of 23S rRNA at the 2'-O position of the ribose in the fully assembled 50S ribosomal subunit. The chain is Ribosomal RNA large subunit methyltransferase E from Novosphingobium aromaticivorans (strain ATCC 700278 / DSM 12444 / CCUG 56034 / CIP 105152 / NBRC 16084 / F199).